Here is a 151-residue protein sequence, read N- to C-terminus: Transcriptional repressor NrdR (151 aa).

The segment at 3-34 (CPYCAYGESKVVDSRSTEDGSSIRRRRECLKC) is a zinc-finger region. Residues 49–139 (ILVIKKNMSR…VYRQFKDINT (91 aa)) form the ATP-cone domain.

It belongs to the NrdR family. The cofactor is Zn(2+).

Negatively regulates transcription of bacterial ribonucleotide reductase nrd genes and operons by binding to NrdR-boxes. The chain is Transcriptional repressor NrdR from Clostridium botulinum (strain ATCC 19397 / Type A).